The chain runs to 85 residues: Large ribosomal subunit protein bL27 (85 aa).

A disordered region spans residues 1–21; the sequence is MAHKKGVGSTRNGRDSESKRL.

Belongs to the bacterial ribosomal protein bL27 family.

This Geobacter sulfurreducens (strain ATCC 51573 / DSM 12127 / PCA) protein is Large ribosomal subunit protein bL27.